A 585-amino-acid polypeptide reads, in one-letter code: Arginine--tRNA ligase (585 aa).

The 'HIGH' region motif lies at 130 to 140 (ANPTGPMHVGH).

This sequence belongs to the class-I aminoacyl-tRNA synthetase family. In terms of assembly, monomer.

It is found in the cytoplasm. It carries out the reaction tRNA(Arg) + L-arginine + ATP = L-arginyl-tRNA(Arg) + AMP + diphosphate. The chain is Arginine--tRNA ligase from Methylorubrum extorquens (strain PA1) (Methylobacterium extorquens).